The following is a 434-amino-acid chain: 3-phosphoshikimate 1-carboxyvinyltransferase (434 aa).

The 3-phosphoshikimate site is built by lysine 15, serine 16, and arginine 20. Lysine 15 is a binding site for phosphoenolpyruvate. Phosphoenolpyruvate contacts are provided by glycine 96 and arginine 124. 5 residues coordinate 3-phosphoshikimate: serine 169, glutamine 171, serine 195, aspartate 319, and lysine 346. Phosphoenolpyruvate is bound at residue glutamine 171. Aspartate 319 acts as the Proton acceptor in catalysis. Arginine 350 and arginine 394 together coordinate phosphoenolpyruvate.

The protein belongs to the EPSP synthase family. Monomer.

It is found in the cytoplasm. It catalyses the reaction 3-phosphoshikimate + phosphoenolpyruvate = 5-O-(1-carboxyvinyl)-3-phosphoshikimate + phosphate. The protein operates within metabolic intermediate biosynthesis; chorismate biosynthesis; chorismate from D-erythrose 4-phosphate and phosphoenolpyruvate: step 6/7. Catalyzes the transfer of the enolpyruvyl moiety of phosphoenolpyruvate (PEP) to the 5-hydroxyl of shikimate-3-phosphate (S3P) to produce enolpyruvyl shikimate-3-phosphate and inorganic phosphate. In Chlorobaculum tepidum (strain ATCC 49652 / DSM 12025 / NBRC 103806 / TLS) (Chlorobium tepidum), this protein is 3-phosphoshikimate 1-carboxyvinyltransferase.